Consider the following 266-residue polypeptide: Calpain small subunit 1 (266 aa).

N-acetylmethionine is present on Met-1. Ser-6 carries the phosphoserine modification. One can recognise an EF-hand 1; atypical domain in the interval 94–128 (EEVRQFRRLFAQLAGDDMEVSATELMNILNKVVTR). Ca(2+) contacts are provided by Ala-107, Asp-110, Glu-112, Glu-117, Asp-135, Asp-150, Asp-152, Thr-154, Lys-156, and Glu-161. EF-hand domains lie at 137 to 170 (FGID…NNIK), 167 to 202 (NNIK…AGFH), 203 to 231 (LNEH…ISCL), and 232 to 266 (VRLD…TMYS). Lys-177 bears the N6-acetyllysine mark. The Ca(2+) site is built by Asp-180, Asp-182, Ser-184, Thr-186, Glu-191, and Asp-223.

In terms of assembly, homodimer or heterodimer of a large (catalytic) and a small (regulatory) subunit. In presence of calcium, the heterodimer dissociates.

The protein localises to the cytoplasm. Its subcellular location is the cell membrane. Regulatory subunit of the calcium-regulated non-lysosomal thiol-protease which catalyzes limited proteolysis of substrates involved in cytoskeletal remodeling and signal transduction. Essential for embryonic development. The chain is Calpain small subunit 1 (CAPNS1) from Sus scrofa (Pig).